Consider the following 433-residue polypeptide: Arrestin domain-containing protein 1 (433 aa).

Disordered stretches follow at residues 296–322 (GLGL…AEAA) and 349–372 (LSSV…PLHP). The span at 301–312 (PGAPPLVVPSAP) shows a compositional bias: pro residues. Short sequence motifs (PPxY motif) lie at residues 402 to 405 (PPEY) and 415 to 418 (PPSY).

The protein belongs to the arrestin family. Interacts (via PPxY motifs) with ITCH (via WW domains); the interaction is direct and participates in the recruitment of the ubiquitin-protein ligase ITCH to the NOTCH1 receptor. Interacts with ARRB1 and ARRB2; the interaction is direct. Interacts with TSG101; may recruit TSG101 to the plasma membrane. Interacts (via PPxY motifs) with WWP2 (via WW domains); ubiquitinates ARRDC1. Interacts with SLC11A2; controls the incorporation of SLC11A2 into extracellular vesicles through an ubiquitination-dependent mechanism. Interacts with WWP1 (via WW domains). Interacts with NEDD4 (via WW domains). Interacts with PDCD6IP. Post-translationally, ubiquitinated. Ubiquitination by WWP2; promotes localization to extracellular microvesicles. Ubiquitinated by WWP1.

The protein localises to the cell membrane. Functions as an adapter recruiting ubiquitin-protein ligases to their specific substrates. Through an ubiquitination-dependent mechanism plays for instance a role in the incorporation of SLC11A2 into extracellular vesicles. More generally, plays a role in the extracellular transport of proteins between cells through the release in the extracellular space of microvesicles. By participating in the ITCH-mediated ubiquitination and subsequent degradation of NOTCH1, negatively regulates the NOTCH signaling pathway. This is Arrestin domain-containing protein 1 from Homo sapiens (Human).